The following is an 89-amino-acid chain: Large ribosomal subunit protein uL23c (89 aa).

Belongs to the universal ribosomal protein uL23 family. Part of the 50S ribosomal subunit.

It localises to the plastid. Its subcellular location is the chloroplast. Functionally, binds to 23S rRNA. This Staurastrum punctulatum (Green alga) protein is Large ribosomal subunit protein uL23c (rpl23).